A 2342-amino-acid chain; its full sequence is Outer kinetochore KNL1 complex subunit KNL1 (2342 aa).

Residues 1-56 (MDGVSSEANEENDNIERPVRRRHSSILKPPRSPLQDLRGGNERVQESNALRNKKNS) form a disordered region. Residues 1–250 (MDGVSSEANE…FNDFIKRLKT (250 aa)) are may mediate oligomerization. The segment at 1 to 728 (MDGVSSEANE…QSLFSTTKPL (728 aa)) is interaction with BUB1 and BUB1B. 2 interaction with microtubules regions span residues 17 to 34 (RPVR…RSPL) and 53 to 80 (KKNS…VRKS). The segment at 23-80 (HSSILKPPRSPLQDLRGGNERVQESNALRNKKNSRRVSFADTIKVFQTESHMKIVRKS) is interaction with PP1CA; contains the protein phosphatase 1 (PP1) interaction motifs SILK, RVXF and phi-phi. S24 is subject to Phosphoserine; by AURKB. Residue S32 is modified to Phosphoserine. Residue S60 is modified to Phosphoserine; by AURKB. Residues 174–190 (ENQMDLTSSHTVMITKG) form an interaction with BUB1 region. The interaction with BUB1B stretch occupies residues 210–226 (ANLKLHTEDSRMKKEVN). A Phosphothreonine modification is found at T539. 2 positions are modified to phosphoserine: S578 and S584. T586 is modified (phosphothreonine). The tract at residues 620–646 (APESTSESHSQSKSSSDECEEITKSRN) is disordered. Residues 622–633 (ESTSESHSQSKS) show a composition bias toward low complexity. Phosphoserine is present on S767. The segment at 855-1201 (EDESVQKPKF…VTDSHTVFID (347 aa)) is 2 X 104 AA approximate repeats. The stretch at 885 to 989 (DKTIVFSEDD…MTESHTVFID (105 aa)) is repeat 1. Position 901 is a phosphothreonine (T901). A phosphoserine mark is found at S956, S1039, S1076, and S1088. Copy 2 of the repeat occupies 1099–1201 (DKTIVFSENH…VTDSHTVFID (103 aa)). A Phosphoserine modification is found at S1448. Residues 1639 to 1662 (SNAKDSRDEENKKSHNGAETTSLP) are disordered. Residues 1642–1651 (KDSRDEENKK) show a composition bias toward basic and acidic residues. S1675 and S1773 each carry phosphoserine. The short motif at 1789–1803 (TWVQEEEDIHKEKKI) is the Nuclear localization signal element. S1831 carries the post-translational modification Phosphoserine. Phosphoserine; by TTK occurs at positions 1831 and 1834. Phosphoserine is present on residues S1845 and S1860. The segment at 1981–2108 (KMRHCSDKEL…LLELEVQKEQ (128 aa)) is required for interaction with ZWINT. Residues 2024 to 2133 (VQSAQNEREK…EELLDQLSLS (110 aa)) adopt a coiled-coil conformation. The tract at residues 2091 to 2311 (EEEELQRNLL…GNTSQDDIAT (221 aa)) is interaction with NSL1, DSN1 and required for assembly into the outer kinetochore.

In terms of assembly, component of the KNL1 complex composed of KNL1 and ZWINT. Part of the ten-subunit outer kinetochore KMN network that includes the KNL1, MIS12 and NDC80 complexes; a bioriented kinetochore contains approximately 150 copies of the network. Interacts (via C-terminus) with the MIS12 complex subunits NSL1 (via C-terminus), PMF1 and DSN1; the interaction is direct. Interacts (via N-terminal region) with BUB1B (via BUB1 N-terminal domain); the interaction is direct and is required for cell cycle arrest upon activation of the mitotic spindle assembly checkpoint. Interacts (via N-terminal region) with BUB1 (via BUB1 N-terminal domain); the interaction is direct. Interacts with the protein phosphatase PP1 subunit PPP1CA; the interaction is direct and mutually exclusive with binding to microtubules. Interacts with the protein phosphatase PP1 subunit PPP1CC; the interaction is direct and mutually exclusive with binding to microtubules. In terms of processing, phosphorylation by AURKB negatively regulates its interaction with protein phosphatase 1 (PP1) subunit PPP1CA and with microtubules. As to expression, highly expressed in testis, where it is localized in germ cells, in particular in spermatocytes and in the pre-acrosome of round spermatids. Detected in the acrosome of ejaculated spermatozoa. Detected in adult thymus, bone marrow, colon, small intestine, appendix and placenta, and in fetal liver and thymus.

The protein resides in the nucleus. It is found in the chromosome. The protein localises to the centromere. Its subcellular location is the kinetochore. It localises to the cytoplasm. Its function is as follows. Acts as a component of the outer kinetochore KNL1 complex that serves as a docking point for spindle assembly checkpoint components and mediates microtubule-kinetochore interactions. Kinetochores, consisting of a centromere-associated inner segment and a microtubule-contacting outer segment, play a crucial role in chromosome segregation by mediating the physical connection between centromeric DNA and spindle microtubules. The outer kinetochore is made up of the ten-subunit KMN network, comprising the MIS12, NDC80 and KNL1 complexes, and auxiliary microtubule-associated components; together they connect the outer kinetochore with the inner kinetochore, bind microtubules, and mediate interactions with mitotic checkpoint proteins that delay anaphase until chromosomes are bioriented on the spindle. Required for kinetochore binding by a distinct subset of kMAPs (kinetochore-bound microtubule-associated proteins) and motors. Acts in coordination with CENPK to recruit the NDC80 complex to the outer kinetochore. Can bind either to microtubules or to the protein phosphatase 1 (PP1) catalytic subunits PPP1CA and PPP1CC (via overlapping binding sites), it has higher affinity for PP1. Recruits MAD2L1 to the kinetochore and also directly links BUB1 and BUB1B to the kinetochore. In addition to orienting mitotic chromosomes, it is also essential for alignment of homologous chromosomes during meiotic metaphase I. In meiosis I, required to activate the spindle assembly checkpoint at unattached kinetochores to correct erroneous kinetochore-microtubule attachments. This is Outer kinetochore KNL1 complex subunit KNL1 from Homo sapiens (Human).